The following is a 262-amino-acid chain: Ribonuclease 3 (262 aa).

In terms of domain architecture, RNase III spans 18-141 (LATFLKNLDI…LVGAIYEDMG (124 aa)). Glutamate 59 provides a ligand contact to Mg(2+). Aspartate 63 is an active-site residue. The Mg(2+) site is built by aspartate 127 and glutamate 130. Glutamate 130 is a catalytic residue.

This sequence belongs to the ribonuclease III family. Homodimer. Requires Mg(2+) as cofactor.

It localises to the cytoplasm. The enzyme catalyses Endonucleolytic cleavage to 5'-phosphomonoester.. In terms of biological role, digests double-stranded RNA. Involved in the processing of primary rRNA transcript to yield the immediate precursors to the large and small rRNAs (23S and 16S). Processes some mRNAs, and tRNAs when they are encoded in the rRNA operon. Processes pre-crRNA and tracrRNA of type II CRISPR loci if present in the organism. The polypeptide is Ribonuclease 3 (Mycoplasma genitalium (strain ATCC 33530 / DSM 19775 / NCTC 10195 / G37) (Mycoplasmoides genitalium)).